The following is a 493-amino-acid chain: 3-octaprenyl-4-hydroxybenzoate carboxy-lyase (493 aa).

Asn-172 is a binding site for Mn(2+). Prenylated FMN-binding positions include Ile-175 to Arg-177, Arg-189 to Leu-191, and Arg-194 to Gly-195. A Mn(2+)-binding site is contributed by Glu-238. Residue Asp-287 is the Proton donor of the active site.

The protein belongs to the UbiD family. As to quaternary structure, homohexamer. Requires prenylated FMN as cofactor. The cofactor is Mn(2+).

The protein localises to the cell membrane. The enzyme catalyses a 4-hydroxy-3-(all-trans-polyprenyl)benzoate + H(+) = a 2-(all-trans-polyprenyl)phenol + CO2. Its pathway is cofactor biosynthesis; ubiquinone biosynthesis. Its function is as follows. Catalyzes the decarboxylation of 3-octaprenyl-4-hydroxy benzoate to 2-octaprenylphenol, an intermediate step in ubiquinone biosynthesis. The chain is 3-octaprenyl-4-hydroxybenzoate carboxy-lyase from Shewanella frigidimarina (strain NCIMB 400).